The following is a 775-amino-acid chain: Phenylalanine--tRNA ligase beta subunit (775 aa).

A tRNA-binding domain is found at 39 to 147; the sequence is GIDLDGVVFG…EDFKPGTDAN (109 aa). The B5 domain occupies 394–470; the sequence is YKPKKVFLPQ…RVKGYEHYTS (77 aa). Residues aspartate 448, aspartate 454, glutamate 457, and glutamate 458 each contribute to the Mg(2+) site. The 94-residue stretch at 681–774 folds into the FDX-ACB domain; it reads AKFPPVVRDI…LKEKYGVELR (94 aa).

It belongs to the phenylalanyl-tRNA synthetase beta subunit family. Type 1 subfamily. In terms of assembly, tetramer of two alpha and two beta subunits. The cofactor is Mg(2+).

The protein localises to the cytoplasm. It catalyses the reaction tRNA(Phe) + L-phenylalanine + ATP = L-phenylalanyl-tRNA(Phe) + AMP + diphosphate + H(+). In Aquifex aeolicus (strain VF5), this protein is Phenylalanine--tRNA ligase beta subunit (pheT).